We begin with the raw amino-acid sequence, 901 residues long: HTH-type transcriptional regulator MalT (901 aa).

39-46 (SPAGYGKT) provides a ligand contact to ATP. An HTH luxR-type domain is found at 829-894 (ELIRTSPLTQ…AAVQHAQKLL (66 aa)). Residues 853-872 (NEQIAGELEVAATTIKTHIR) constitute a DNA-binding region (H-T-H motif).

It belongs to the MalT family. As to quaternary structure, monomer in solution. Oligomerizes to an active state in the presence of the positive effectors ATP and maltotriose.

With respect to regulation, activated by ATP and maltotriose, which are both required for DNA binding. In terms of biological role, positively regulates the transcription of the maltose regulon whose gene products are responsible for uptake and catabolism of malto-oligosaccharides. Specifically binds to the promoter region of its target genes, recognizing a short DNA motif called the MalT box. In Escherichia coli O45:K1 (strain S88 / ExPEC), this protein is HTH-type transcriptional regulator MalT.